Here is a 493-residue protein sequence, read N- to C-terminus: Cytochrome P450 2E1 (493 aa).

298-303 (FAGTET) contacts substrate. A heme-binding site is contributed by C437.

Belongs to the cytochrome P450 family. Interacts with chaperones HSP70 and HSP90; this interaction is required for initial targeting to mitochondria. Heme is required as a cofactor. Highest level in the liver and to a lesser extent in the kidney, with a higher level in the male kidney than in the female.

It localises to the endoplasmic reticulum membrane. It is found in the microsome membrane. The protein resides in the mitochondrion inner membrane. It catalyses the reaction an organic molecule + reduced [NADPH--hemoprotein reductase] + O2 = an alcohol + oxidized [NADPH--hemoprotein reductase] + H2O + H(+). The enzyme catalyses (5Z,8Z,11Z)-eicosatrienoate + reduced [NADPH--hemoprotein reductase] + O2 = 19-hydroxy-(5Z,8Z,11Z)-eicosatrienoate + oxidized [NADPH--hemoprotein reductase] + H2O + H(+). The catalysed reaction is (5Z,8Z,11Z,14Z,17Z)-eicosapentaenoate + reduced [NADPH--hemoprotein reductase] + O2 = 19-hydroxy-(5Z,8Z,11Z,14Z,17Z)-eicosapentaenoate + oxidized [NADPH--hemoprotein reductase] + H2O + H(+). It carries out the reaction (4Z,7Z,10Z,13Z,16Z,19Z)-docosahexaenoate + reduced [NADPH--hemoprotein reductase] + O2 = 21-hydroxy-(4Z,7Z,10Z,13Z,16Z,19Z)-docosahexaenoate + oxidized [NADPH--hemoprotein reductase] + H2O + H(+). It catalyses the reaction dodecanoate + reduced [NADPH--hemoprotein reductase] + O2 = 11-hydroxydodecanoate + oxidized [NADPH--hemoprotein reductase] + H2O + H(+). The enzyme catalyses tetradecanoate + reduced [NADPH--hemoprotein reductase] + O2 = 13-hydroxytetradecanoate + oxidized [NADPH--hemoprotein reductase] + H2O + H(+). The catalysed reaction is 4-nitrophenol + NADPH + O2 + H(+) = 4-nitrocatechol + NADP(+) + H2O. Its pathway is lipid metabolism; fatty acid metabolism. Its activity is regulated as follows. The omega-1 hydroxylase activity is stimulated by cytochrome b5. A cytochrome P450 monooxygenase involved in the metabolism of fatty acids. Mechanistically, uses molecular oxygen inserting one oxygen atom into a substrate, and reducing the second into a water molecule, with two electrons provided by NADPH via cytochrome P450 reductase (NADPH--hemoprotein reductase). Catalyzes the hydroxylation of carbon-hydrogen bonds. Hydroxylates fatty acids specifically at the omega-1 position displaying the highest catalytic activity for saturated fatty acids. May be involved in the oxidative metabolism of xenobiotics. This chain is Cytochrome P450 2E1 (Cyp2e1), found in Mus musculus (Mouse).